Here is a 446-residue protein sequence, read N- to C-terminus: N-succinylarginine dihydrolase (446 aa).

Substrate-binding positions include 19 to 28, asparagine 110, and 137 to 138; these read AGLSFGNVAS and HR. Glutamate 174 is a catalytic residue. Arginine 213 is a substrate binding site. Residue histidine 249 is part of the active site. Substrate contacts are provided by aspartate 251 and asparagine 364. Catalysis depends on cysteine 370, which acts as the Nucleophile.

This sequence belongs to the succinylarginine dihydrolase family. Homodimer.

The enzyme catalyses N(2)-succinyl-L-arginine + 2 H2O + 2 H(+) = N(2)-succinyl-L-ornithine + 2 NH4(+) + CO2. It participates in amino-acid degradation; L-arginine degradation via AST pathway; L-glutamate and succinate from L-arginine: step 2/5. In terms of biological role, catalyzes the hydrolysis of N(2)-succinylarginine into N(2)-succinylornithine, ammonia and CO(2). In Burkholderia ambifaria (strain MC40-6), this protein is N-succinylarginine dihydrolase.